Consider the following 271-residue polypeptide: Tryptophan synthase alpha chain (271 aa).

Active-site proton acceptor residues include Glu-49 and Asp-60.

Belongs to the TrpA family. In terms of assembly, tetramer of two alpha and two beta chains.

The enzyme catalyses (1S,2R)-1-C-(indol-3-yl)glycerol 3-phosphate + L-serine = D-glyceraldehyde 3-phosphate + L-tryptophan + H2O. It functions in the pathway amino-acid biosynthesis; L-tryptophan biosynthesis; L-tryptophan from chorismate: step 5/5. The alpha subunit is responsible for the aldol cleavage of indoleglycerol phosphate to indole and glyceraldehyde 3-phosphate. The chain is Tryptophan synthase alpha chain from Burkholderia multivorans (strain ATCC 17616 / 249).